The following is a 215-amino-acid chain: MRIKICGITQPDQGQAIAQLGATALGFICVPQSPRYVTPDQIQGVITQLSISVDRIGVFANASLSQIEQVVQQTELTGVQLHGDESPQLCSEIKQRFNHLELIKAFRVKNLEALAQITAYFDRVDTLLLDAYHPQLLGGTGHTLNWDNLAHFNPPLPWFLAGGLTPDNIQEALTRLHPTGIDLSSGVERSPGDKDLTKVAQLLTQLQQFSSKKFP.

The protein belongs to the TrpF family.

It catalyses the reaction N-(5-phospho-beta-D-ribosyl)anthranilate = 1-(2-carboxyphenylamino)-1-deoxy-D-ribulose 5-phosphate. The protein operates within amino-acid biosynthesis; L-tryptophan biosynthesis; L-tryptophan from chorismate: step 3/5. The chain is N-(5'-phosphoribosyl)anthranilate isomerase from Rippkaea orientalis (strain PCC 8801 / RF-1) (Cyanothece sp. (strain PCC 8801)).